The following is a 385-amino-acid chain: Rhomboid domain-containing protein 3 (385 aa).

Transmembrane regions (helical) follow at residues 13 to 33, 58 to 78, 93 to 113, 146 to 166, and 168 to 188; these read ALPLASSVLMLLLSCLWLLGA, LGHTALPGLLLSLLLLPTLGW, SAVLALATGLLAVLLAGLGLS, WLLPWLLLALTLLLSSEPPFL, and LLCGLLAGLAYAAGAFRWLEL. One can recognise a UBA domain in the interval 322–361; sequence SVSSLRLQQLQHMGFPTEQAAVALAATGRVEGAVSLLVEG.

The protein localises to the membrane. The chain is Rhomboid domain-containing protein 3 (Rhbdd3) from Rattus norvegicus (Rat).